Here is a 94-residue protein sequence, read N- to C-terminus: DNA-directed RNA polymerase subunit omega (94 aa).

This sequence belongs to the RNA polymerase subunit omega family. In terms of assembly, the RNAP catalytic core consists of 2 alpha, 1 beta, 1 beta' and 1 omega subunit. When a sigma factor is associated with the core the holoenzyme is formed, which can initiate transcription.

It catalyses the reaction RNA(n) + a ribonucleoside 5'-triphosphate = RNA(n+1) + diphosphate. Functionally, promotes RNA polymerase assembly. Latches the N- and C-terminal regions of the beta' subunit thereby facilitating its interaction with the beta and alpha subunits. This is DNA-directed RNA polymerase subunit omega from Frankia casuarinae (strain DSM 45818 / CECT 9043 / HFP020203 / CcI3).